A 595-amino-acid chain; its full sequence is Protein halfway (595 aa).

2 disordered regions span residues 1 to 42 (MLLT…ADDE) and 64 to 98 (TGAA…PLLP). N-linked (GlcNAc...) asparagine glycans are attached at residues N250 and N255. The 56-residue stretch at 347-402 (ESTKRCMTKCPVIPNYGSCKCRFESIMIIQDDQSKPKCHVDCSNLGLVELPPRLPD) folds into the LRRNT domain. LRR repeat units follow at residues 403-424 (NTFV…FQTN), 429-450 (NINR…EGTK), and 454-475 (NFQR…FLNN). Positions 489–538 (NKLQCDCNSAKTLQNWLKERSTDIPDYMEIRCRNIPQSVIELQEAKLCQS) constitute an LRRCT domain.

Its function is as follows. Has a role in the ecdysone induced cascade; probably indirect control of 'late' ecdysone genes. This chain is Protein halfway (hfw), found in Drosophila pseudoobscura pseudoobscura (Fruit fly).